The chain runs to 418 residues: Gamma-glutamyl phosphate reductase (418 aa).

The protein belongs to the gamma-glutamyl phosphate reductase family.

The protein resides in the cytoplasm. The catalysed reaction is L-glutamate 5-semialdehyde + phosphate + NADP(+) = L-glutamyl 5-phosphate + NADPH + H(+). It functions in the pathway amino-acid biosynthesis; L-proline biosynthesis; L-glutamate 5-semialdehyde from L-glutamate: step 2/2. Functionally, catalyzes the NADPH-dependent reduction of L-glutamate 5-phosphate into L-glutamate 5-semialdehyde and phosphate. The product spontaneously undergoes cyclization to form 1-pyrroline-5-carboxylate. This is Gamma-glutamyl phosphate reductase from Marinobacter nauticus (strain ATCC 700491 / DSM 11845 / VT8) (Marinobacter aquaeolei).